A 267-amino-acid chain; its full sequence is 4-hydroxy-tetrahydrodipicolinate reductase (267 aa).

Residues 9–14 and D35 contribute to the NAD(+) site; that span reads GAGGRM. R36 contributes to the NADP(+) binding site. NAD(+) contacts are provided by residues 99 to 101 and 123 to 126; these read GTT and AANY. H156 acts as the Proton donor/acceptor in catalysis. H157 serves as a coordination point for (S)-2,3,4,5-tetrahydrodipicolinate. The active-site Proton donor is K160. Position 166 to 167 (166 to 167) interacts with (S)-2,3,4,5-tetrahydrodipicolinate; that stretch reads GT.

This sequence belongs to the DapB family.

The protein localises to the cytoplasm. It catalyses the reaction (S)-2,3,4,5-tetrahydrodipicolinate + NAD(+) + H2O = (2S,4S)-4-hydroxy-2,3,4,5-tetrahydrodipicolinate + NADH + H(+). The enzyme catalyses (S)-2,3,4,5-tetrahydrodipicolinate + NADP(+) + H2O = (2S,4S)-4-hydroxy-2,3,4,5-tetrahydrodipicolinate + NADPH + H(+). It functions in the pathway amino-acid biosynthesis; L-lysine biosynthesis via DAP pathway; (S)-tetrahydrodipicolinate from L-aspartate: step 4/4. Functionally, catalyzes the conversion of 4-hydroxy-tetrahydrodipicolinate (HTPA) to tetrahydrodipicolinate. This Halorhodospira halophila (strain DSM 244 / SL1) (Ectothiorhodospira halophila (strain DSM 244 / SL1)) protein is 4-hydroxy-tetrahydrodipicolinate reductase.